The chain runs to 165 residues: Nucleotide-binding protein PMT9312_0481 (165 aa).

Belongs to the YajQ family.

Its function is as follows. Nucleotide-binding protein. In Prochlorococcus marinus (strain MIT 9312), this protein is Nucleotide-binding protein PMT9312_0481.